Reading from the N-terminus, the 187-residue chain is NADPH-dependent 3-demethoxyubiquinone 3-hydroxylase, mitochondrial (187 aa).

The transit peptide at 1 to 8 directs the protein to the mitochondrion; it reads MFRVITRG. Position 21 (lysine 21) interacts with NADH. 2 consecutive repeat copies span residues 28 to 99 and 100 to 187. A 2 X approximate tandem repeats region spans residues 28 to 187; the sequence is AGELGADRIY…KGAIAIAEKI (160 aa). 6 residues coordinate Fe cation: glutamate 30, glutamate 60, histidine 63, glutamate 112, glutamate 148, and histidine 151. Lysine 186 is an NADH binding site.

The protein belongs to the COQ7 family. As to quaternary structure, component of a multi-subunit COQ enzyme complex. Fe cation is required as a cofactor.

Its subcellular location is the mitochondrion inner membrane. The protein resides in the mitochondrion. The protein localises to the nucleus. It carries out the reaction a 5-methoxy-2-methyl-3-(all-trans-polyprenyl)benzoquinone + NADH + O2 = a 3-demethylubiquinone + NAD(+) + H2O. It functions in the pathway cofactor biosynthesis; ubiquinone biosynthesis. In terms of biological role, catalyzes the hydroxylation of the 5-methoxy-2-methyl-3-(all-trans-polyprenyl)benzoquinone at the C6 position and participates in the biosynthesis of ubiquinone. Catalyzes the reaction through a substrate-mediated reduction pathway, whereby NADH shuttles electrons to 5-methoxy-2-methyl-3-(all-trans-decaprenyl)benzoquinone, which then transfers the electrons to the two Fe(3+) centers. The binding of 5-methoxy-2-methyl-3-(all-trans-polyprenyl)benzoquinone (DMQn) mediates reduction of the diiron center by nicotinamide adenine dinucleotide (NADH) and initiates oxygen activation for subsequent DMQ hydroxylation. Also has a structural role in the COQ enzyme complex, stabilizing other COQ polypeptides. Involved in lifespan determination in a ubiquinone-independent manner. Plays a role in modulating mitochondrial stress responses, acting in the nucleus, perhaps via regulating gene expression, independent of its characterized mitochondrial function in ubiquinone biosynthesis. Plays a role in modulating polyribosome formation. The protein is NADPH-dependent 3-demethoxyubiquinone 3-hydroxylase, mitochondrial of Caenorhabditis elegans.